The primary structure comprises 189 residues: MTEYKLVVVGAGGVGKSALTIQLIQNHFVDEYDPTIEDSYRKQVVIDGETCLLDILDTAGQEEYSAMRDQYMRTGEGFLCVFAINNSKSFADINLYREQIKRVKDSDDVPMVLVGNKCDLPTRTVDTKQAHELAKSYGIPFIETSAKTRQGVEDAFYTLVREIRQYRMKKLNSNDDGTQGCMGLPCVVM.

Residues 10–18 and 29–30 each bind GTP; these read GAGGVGKSA and VD. An Effector region motif is present at residues 32–40; that stretch reads YDPTIEDSY. Residue 57–61 coordinates GTP; sequence DTAGQ. Ser-89 bears the Phosphoserine mark. 116 to 119 contributes to the GTP binding site; that stretch reads NKCD. Positions 166-185 are hypervariable region; that stretch reads YRMKKLNSNDDGTQGCMGLP. Lys-170 participates in a covalent cross-link: Glycyl lysine isopeptide (Lys-Gly) (interchain with G-Cter in ubiquitin). The S-palmitoyl cysteine moiety is linked to residue Cys-181. Cys-186 carries S-farnesyl cysteine lipidation. Positions 187-189 are cleaved as a propeptide — removed in mature form; sequence VVM.

It belongs to the small GTPase superfamily. Ras family. As to quaternary structure, interacts (active GTP-bound form preferentially) with RGS14. Interacts (active GTP-bound form) with RASSF7. Interacts (active GTP-bound form) with both SHOC2 and PP1c (all isoforms) to form a tertiary complex; SHOC2 and PP1c preferably bind M-Ras/MRAS, but they also bind K-Ras/KRAS, N-Ras/NRAS and H-Ras/HRAS. Palmitoylated by the ZDHHC9-GOLGA7 complex. Depalmitoylated by ABHD17A, ABHD17B and ABHD17C. A continuous cycle of de- and re-palmitoylation regulates rapid exchange between plasma membrane and Golgi. Post-translationally, acetylation at Lys-104 prevents interaction with guanine nucleotide exchange factors (GEFs). In terms of processing, ubiquitinated by the BCR(LZTR1) E3 ubiquitin ligase complex at Lys-170 in a non-degradative manner, leading to inhibit Ras signaling by decreasing Ras association with membranes. Phosphorylation at Ser-89 enhances NRAS association with its downstream effectors.

The protein localises to the cell membrane. Its subcellular location is the golgi apparatus membrane. The catalysed reaction is GTP + H2O = GDP + phosphate + H(+). Alternates between an inactive form bound to GDP and an active form bound to GTP. Activated by a guanine nucleotide-exchange factor (GEF) and inactivated by a GTPase-activating protein (GAP). Its function is as follows. Ras proteins bind GDP/GTP and possess intrinsic GTPase activity. The polypeptide is GTPase NRas (NRAS) (Cavia porcellus (Guinea pig)).